Consider the following 809-residue polypeptide: Leucine-rich repeat and calponin homology domain-containing protein (809 aa).

Residues 27–53 (GSASLPGSGTGSGSGIGHAGNTSSSTS) form a disordered region. Over residues 34 to 44 (SGTGSGSGIGH) the composition is skewed to gly residues. LRR repeat units lie at residues 72–96 (EAHF…GTKY), 98–121 (LTDT…VTTF), 122–144 (AFLE…VKQL), 145–168 (SSLT…CFLP), 170–189 (QVLL…LGRL), 191–213 (QTLT…LGEL), 214–236 (RSLR…LTCL), 238–258 (LISL…IRHM), and 260–282 (TLVE…CMRG). Disordered stretches follow at residues 295-373 (TKDE…LHCV), 423-442 (LSYA…QDDD), and 490-550 (KHPN…VDDV). Residues 319-336 (HNSSGNVLEASTTGSTNN) are compositionally biased toward polar residues. The segment covering 351–368 (GLDKRWSHDAPTKSKTDS) has biased composition (basic and acidic residues). The segment covering 518-532 (NTLPKSIMKQNSNQI) has biased composition (polar residues). Residues 662 to 776 (QREETELMSQ…TVGELFRLHG (115 aa)) form the Calponin-homology (CH) domain. The tract at residues 783–809 (GNSSGAATPTKSPTRTTRATMSPTPLA) is disordered. Residues 788–809 (AATPTKSPTRTTRATMSPTPLA) are compositionally biased toward polar residues.

The protein localises to the cytoplasm. The protein resides in the cytoskeleton. It localises to the cell cortex. It is found in the cleavage furrow. Functionally, may play a role in the stabilization of the actin-rich cell cortex during cell division. This is Leucine-rich repeat and calponin homology domain-containing protein from Drosophila melanogaster (Fruit fly).